Consider the following 326-residue polypeptide: Undecaprenyl-phosphate 4-deoxy-4-formamido-L-arabinose transferase (326 aa).

Residues 1–235 (MFEIHPIKKV…TCLTTTPLRM (235 aa)) lie on the Cytoplasmic side of the membrane. A helical transmembrane segment spans residues 236 to 256 (LSLLGSIIATSGFSLAILLVV). Topologically, residues 257–269 (LRLAFGSQWSGEG) are periplasmic. Residues 270 to 290 (VFMLFAVLFTFIGAQFIGMGL) form a helical membrane-spanning segment. Over 291-326 (LGEYIGRIYNDVRARPRYFVQKVIRPASSIDIEENH) the chain is Cytoplasmic.

This sequence belongs to the glycosyltransferase 2 family.

The protein resides in the cell inner membrane. The catalysed reaction is UDP-4-deoxy-4-formamido-beta-L-arabinose + di-trans,octa-cis-undecaprenyl phosphate = 4-deoxy-4-formamido-alpha-L-arabinopyranosyl di-trans,octa-cis-undecaprenyl phosphate + UDP. The protein operates within glycolipid biosynthesis; 4-amino-4-deoxy-alpha-L-arabinose undecaprenyl phosphate biosynthesis; 4-amino-4-deoxy-alpha-L-arabinose undecaprenyl phosphate from UDP-4-deoxy-4-formamido-beta-L-arabinose and undecaprenyl phosphate: step 1/2. It participates in bacterial outer membrane biogenesis; lipopolysaccharide biosynthesis. Its function is as follows. Catalyzes the transfer of 4-deoxy-4-formamido-L-arabinose from UDP to undecaprenyl phosphate. The modified arabinose is attached to lipid A and is required for resistance to polymyxin and cationic antimicrobial peptides. The polypeptide is Undecaprenyl-phosphate 4-deoxy-4-formamido-L-arabinose transferase (Escherichia fergusonii (strain ATCC 35469 / DSM 13698 / CCUG 18766 / IAM 14443 / JCM 21226 / LMG 7866 / NBRC 102419 / NCTC 12128 / CDC 0568-73)).